The following is a 197-amino-acid chain: Putative eggshell protein (197 aa).

The signal sequence occupies residues 1–17 (MKFHLVLLLAIVPLTLA).

The chain is Putative eggshell protein from Fasciola hepatica (Liver fluke).